Consider the following 222-residue polypeptide: Probable GTP-binding protein EngB (222 aa).

The 175-residue stretch at A25 to T199 folds into the EngB-type G domain. GTP is bound by residues G33 to S40, G60 to H64, D78 to G81, T145 to D148, and F178 to S180. Residues S40 and T62 each contribute to the Mg(2+) site.

The protein belongs to the TRAFAC class TrmE-Era-EngA-EngB-Septin-like GTPase superfamily. EngB GTPase family. Mg(2+) is required as a cofactor.

Functionally, necessary for normal cell division and for the maintenance of normal septation. The chain is Probable GTP-binding protein EngB from Nitrosomonas europaea (strain ATCC 19718 / CIP 103999 / KCTC 2705 / NBRC 14298).